The sequence spans 576 residues: Polypeptide N-acetylgalactosaminyltransferase 12 (576 aa).

Topologically, residues 1–19 (MWGRAVRRRCPRGLRRGRE) are cytoplasmic. The chain crosses the membrane as a helical; Signal-anchor for type II membrane protein span at residues 20-37 (ALLALLALAGLGALLRAR). A disordered region spans residues 38-58 (SRSGTVDPGPPRTPLPGRHEP). The Lumenal portion of the chain corresponds to 38–576 (SRSGTVDPGP…QRWFFKERMS (539 aa)). 5 disulfide bridges follow: Cys-120–Cys-353, Cys-344–Cys-417, Cys-453–Cys-474, Cys-501–Cys-516, and Cys-542–Cys-561. Positions 130-239 (LPKTSVVIAF…EGWLEPLLQR (110 aa)) are catalytic subdomain A. Substrate is bound by residues Asp-171 and Arg-200. The Mn(2+) site is built by Asp-223 and His-225. A catalytic subdomain B region spans residues 299 to 361 (VIRSPTMAGG…PCSHVGHVFP (63 aa)). Residue Trp-330 coordinates substrate. A Mn(2+)-binding site is contributed by His-358. Tyr-366 is a substrate binding site. The 133-residue stretch at 440–572 (FFGMLQNRGL…NSDNQRWFFK (133 aa)) folds into the Ricin B-type lectin domain.

Belongs to the glycosyltransferase 2 family. GalNAc-T subfamily. The cofactor is Mn(2+).

Its subcellular location is the golgi apparatus membrane. It carries out the reaction L-seryl-[protein] + UDP-N-acetyl-alpha-D-galactosamine = a 3-O-[N-acetyl-alpha-D-galactosaminyl]-L-seryl-[protein] + UDP + H(+). The catalysed reaction is L-threonyl-[protein] + UDP-N-acetyl-alpha-D-galactosamine = a 3-O-[N-acetyl-alpha-D-galactosaminyl]-L-threonyl-[protein] + UDP + H(+). Its pathway is protein modification; protein glycosylation. Catalyzes the initial reaction in O-linked oligosaccharide biosynthesis, the transfer of an N-acetyl-D-galactosamine residue to a serine or threonine residue on the protein receptor. Has activity toward non-glycosylated peptides such as Muc5AC, Muc1a and EA2, and no detectable activity with Muc2 and Muc7. Displays enzymatic activity toward the Gal-NAc-Muc5AC glycopeptide, but no detectable activity to mono-GalNAc-glycosylated Muc1a, Muc2, Muc7 and EA2. May play an important role in the initial step of mucin-type oligosaccharide biosynthesis in digestive organs. In Mus musculus (Mouse), this protein is Polypeptide N-acetylgalactosaminyltransferase 12 (Galnt12).